An 874-amino-acid polypeptide reads, in one-letter code: Alanine--tRNA ligase (874 aa).

Positions 563, 567, 665, and 669 each coordinate Zn(2+).

Belongs to the class-II aminoacyl-tRNA synthetase family. The cofactor is Zn(2+).

The protein resides in the cytoplasm. The enzyme catalyses tRNA(Ala) + L-alanine + ATP = L-alanyl-tRNA(Ala) + AMP + diphosphate. Its function is as follows. Catalyzes the attachment of alanine to tRNA(Ala) in a two-step reaction: alanine is first activated by ATP to form Ala-AMP and then transferred to the acceptor end of tRNA(Ala). Also edits incorrectly charged Ser-tRNA(Ala) and Gly-tRNA(Ala) via its editing domain. In Histophilus somni (strain 129Pt) (Haemophilus somnus), this protein is Alanine--tRNA ligase.